The primary structure comprises 470 residues: MVRVSEDLIRRRAEHNNCEIFSLEEISLHQQDLERIEYIDKWCRELKILYLQNNLIGKIENVSKLKKLEYLNLALNNIEKIENLEGCESLQKLDLTVNFVGDLSSINSLQENRQLREFYLVGNPCAEYEGYRQYVVATLPQLKWLDGKEIERSERIQAAQDYPQVQGKIKEQEEAYLRKRAAEREKATNNLQQKQKEGRKAQEKKPGFDRRWYTDINNTIPDPVEKTDTVAQLNVDETALRNDDEEEEKEFWNQPSQYTPESRLETHRYLEEKRKSKENRSEEELKKKPPRTLITAEGRVLNVNESKLDFSLVDDEENNQFVLDLAIYRHLDTSLLDVDVQPGYIKVLVKEKPFQLVLPAEVKPDSSAAKRSQTTGHLVVTMPKATEMIQTKRAKSPAIAERTCKNPQKCLKTHEKLEVDPKARSIPDVANIVQEKKTWAQGPLRLHRNSARDTADSEDFIDNAEVPPLV.

4 LRR repeats span residues 20-43, 44-65, 66-89, and 90-110; these read IFSL…DKWC, RELK…VSKL, KKLE…GCES, and LQKL…NSLQ. The region spanning 128 to 146 is the LRRCT domain; sequence YEGYRQYVVATLPQLKWLD. Residues 177–288 adopt a coiled-coil conformation; it reads LRKRAAEREK…NRSEEELKKK (112 aa). A disordered region spans residues 182-265; sequence AEREKATNNL…SQYTPESRLE (84 aa). The segment covering 194-213 has biased composition (basic and acidic residues); the sequence is KQKEGRKAQEKKPGFDRRWY. The 93-residue stretch at 303–395 folds into the CS domain; sequence VNESKLDFSL…TEMIQTKRAK (93 aa). A disordered region spans residues 447–470; it reads HRNSARDTADSEDFIDNAEVPPLV.

The protein belongs to the tilB family.

Its subcellular location is the cytoplasm. The protein localises to the cell projection. It localises to the cilium. The protein resides in the dynein axonemal particle. It is found in the flagellum. Its function is as follows. Involved in dynein arm assembly, is important for expression and transporting outer dynein arm (ODA) proteins from the cytoplasm to the cilia. The sequence is that of Dynein axonemal assembly factor 11 (dnaaf11) from Xenopus tropicalis (Western clawed frog).